The primary structure comprises 692 residues: Elongation factor G (692 aa).

The tr-type G domain occupies 8-282 (EKTRNIGIMA…AIVDYLPAPT (275 aa)). GTP contacts are provided by residues 17–24 (AHIDAGKT), 81–85 (DTPGH), and 135–138 (NKMD).

Belongs to the TRAFAC class translation factor GTPase superfamily. Classic translation factor GTPase family. EF-G/EF-2 subfamily.

Its subcellular location is the cytoplasm. Its function is as follows. Catalyzes the GTP-dependent ribosomal translocation step during translation elongation. During this step, the ribosome changes from the pre-translocational (PRE) to the post-translocational (POST) state as the newly formed A-site-bound peptidyl-tRNA and P-site-bound deacylated tRNA move to the P and E sites, respectively. Catalyzes the coordinated movement of the two tRNA molecules, the mRNA and conformational changes in the ribosome. This chain is Elongation factor G, found in Pelotomaculum thermopropionicum (strain DSM 13744 / JCM 10971 / SI).